The following is a 570-amino-acid chain: MPYKISRAAYAGMFGPTTGDKVRLADTELFIEIEKDFTTYGEEVKFGGGKVIRDGMGQSQVTRADGAVDTVITNAVIVDHSGIYKADIGLKNGRIAAIGKAGNPDMQPGVNIIVGPGTEAIAGEGKIVTAGGMDSHIHFIAPQQIEEALMSGMTCMLGGGTGPAHGTLATTCTPGPWHIARMIEAADAFPMNLAFAGKGNASLPGALTEMVLAGATSLKLHEDWGTTPGAIDCCLSVADDYDVQVMIHTDTLNESGFVEDTIGAIKGRTIHAFHTEGAGGGHAPDIIKICGQPNVIPSSTNPTRPYTVNTIAEHLDMLMVCHHLSPSIPEDIAFAESRIRKETIAAEDILHDIGAFSIISSDSQAMGRVGEVAIRTWQTADKMKRQRGRLKEENGDNDNFRVRRYIAKYTINPAIAHGLSHEIGSVETGKRADLVLWNPAFFGVKPDMVLLGGSIAAAPMGDPNASIPTPQPVHYRPMFASYGKSLTNSSVTFVSQASLDAGLKGRLGVAKELVAVKNTRGGISKASMIHNDLTPEIEVDPETYDVRANGELLTCEPATVLPMAQRYFLF.

Positions 131-570 (GGMDSHIHFI…LPMAQRYFLF (440 aa)) constitute a Urease domain. 3 residues coordinate Ni(2+): His136, His138, and Lys219. Position 219 is an N6-carboxylysine (Lys219). Substrate is bound at residue His221. Residues His248 and His274 each contribute to the Ni(2+) site. Residue His322 is the Proton donor of the active site. Asp362 is a binding site for Ni(2+).

This sequence belongs to the metallo-dependent hydrolases superfamily. Urease alpha subunit family. In terms of assembly, heterotrimer of UreA (gamma), UreB (beta) and UreC (alpha) subunits. Three heterotrimers associate to form the active enzyme. Requires Ni cation as cofactor. Carboxylation allows a single lysine to coordinate two nickel ions.

Its subcellular location is the cytoplasm. The enzyme catalyses urea + 2 H2O + H(+) = hydrogencarbonate + 2 NH4(+). It participates in nitrogen metabolism; urea degradation; CO(2) and NH(3) from urea (urease route): step 1/1. The protein is Urease subunit alpha of Rhizobium etli (strain ATCC 51251 / DSM 11541 / JCM 21823 / NBRC 15573 / CFN 42).